Reading from the N-terminus, the 347-residue chain is Heme A synthase (347 aa).

Helical transmembrane passes span 17 to 37 (LANW…VGGI), 106 to 126 (GIGA…AIPA), 132 to 152 (MIGI…MVYS), 165 to 185 (LATH…TVLD), 202 to 222 (ALAI…AFVA), 260 to 280 (IVVQ…ALAV), 295 to 315 (AVAT…LTGV), and 317 to 337 (IAVA…LLWA). Position 266 (histidine 266) interacts with heme. Histidine 323 provides a ligand contact to heme.

The protein belongs to the COX15/CtaA family. Type 2 subfamily. As to quaternary structure, interacts with CtaB. It depends on heme b as a cofactor.

The protein localises to the cell membrane. It catalyses the reaction Fe(II)-heme o + 2 A + H2O = Fe(II)-heme a + 2 AH2. The protein operates within porphyrin-containing compound metabolism; heme A biosynthesis; heme A from heme O: step 1/1. Its function is as follows. Catalyzes the conversion of heme O to heme A by two successive hydroxylations of the methyl group at C8. The first hydroxylation forms heme I, the second hydroxylation results in an unstable dihydroxymethyl group, which spontaneously dehydrates, resulting in the formyl group of heme A. This chain is Heme A synthase, found in Rhizorhabdus wittichii (strain DSM 6014 / CCUG 31198 / JCM 15750 / NBRC 105917 / EY 4224 / RW1) (Sphingomonas wittichii).